A 232-amino-acid polypeptide reads, in one-letter code: Flagellar L-ring protein (232 aa).

The signal sequence occupies residues 1–21 (MQKNAAHTYAISSLLVLSLTG). Cys22 carries the N-palmitoyl cysteine lipid modification. Cys22 is lipidated: S-diacylglycerol cysteine.

The protein belongs to the FlgH family. The basal body constitutes a major portion of the flagellar organelle and consists of four rings (L,P,S, and M) mounted on a central rod.

Its subcellular location is the cell outer membrane. It localises to the bacterial flagellum basal body. In terms of biological role, assembles around the rod to form the L-ring and probably protects the motor/basal body from shearing forces during rotation. The chain is Flagellar L-ring protein from Escherichia coli O7:K1 (strain IAI39 / ExPEC).